We begin with the raw amino-acid sequence, 261 residues long: Ribonuclease HII (261 aa).

An RNase H type-2 domain is found at 71 to 259 (KYIAGVDEVG…VKEAKLHFDS (189 aa)). D77, E78, and D169 together coordinate a divalent metal cation.

The protein belongs to the RNase HII family. The cofactor is Mn(2+). Requires Mg(2+) as cofactor.

The protein resides in the cytoplasm. It carries out the reaction Endonucleolytic cleavage to 5'-phosphomonoester.. Its function is as follows. Endonuclease that specifically degrades the RNA of RNA-DNA hybrids. In Listeria monocytogenes serotype 4a (strain HCC23), this protein is Ribonuclease HII.